Here is a 373-residue protein sequence, read N- to C-terminus: Homoserine O-acetyltransferase (373 aa).

In terms of domain architecture, AB hydrolase-1 spans 52–356; it reads NVVMVLHALT…VYGHDGFLVE (305 aa). The active-site Nucleophile is the Ser-157. Residue Arg-227 participates in substrate binding. Active-site residues include Asp-320 and His-350. Asp-351 lines the substrate pocket.

The protein belongs to the AB hydrolase superfamily. MetX family. In terms of assembly, homodimer.

It is found in the cytoplasm. It carries out the reaction L-homoserine + acetyl-CoA = O-acetyl-L-homoserine + CoA. The protein operates within amino-acid biosynthesis; L-methionine biosynthesis via de novo pathway; O-acetyl-L-homoserine from L-homoserine: step 1/1. Functionally, transfers an acetyl group from acetyl-CoA to L-homoserine, forming acetyl-L-homoserine. The chain is Homoserine O-acetyltransferase from Mycobacterium sp. (strain KMS).